A 345-amino-acid polypeptide reads, in one-letter code: Matrix protein (345 aa).

The interval 148–185 (KKKSKAKSAEGPSASTEDIKDSDTKGNQDIGDNGDLNS) is disordered. Residues 164 to 173 (EDIKDSDTKG) are compositionally biased toward basic and acidic residues.

It is found in the virion. In Aphis (Hairy beggarticks), this protein is Matrix protein (M2).